The primary structure comprises 206 residues: Small ribosomal subunit protein uS4 (206 aa).

The region spanning 96 to 156 is the S4 RNA-binding domain; sequence TRLDNVVYRM…EKSKTQARII (61 aa).

It belongs to the universal ribosomal protein uS4 family. As to quaternary structure, part of the 30S ribosomal subunit. Contacts protein S5. The interaction surface between S4 and S5 is involved in control of translational fidelity.

In terms of biological role, one of the primary rRNA binding proteins, it binds directly to 16S rRNA where it nucleates assembly of the body of the 30S subunit. With S5 and S12 plays an important role in translational accuracy. This chain is Small ribosomal subunit protein uS4, found in Colwellia psychrerythraea (strain 34H / ATCC BAA-681) (Vibrio psychroerythus).